We begin with the raw amino-acid sequence, 206 residues long: Pyridoxine/pyridoxamine 5'-phosphate oxidase (206 aa).

Residues 53–58 (RMVLLK), 68–69 (YT), Lys-75, and Gln-97 each bind FMN. Lys-58 lines the substrate pocket. Positions 115, 119, and 123 each coordinate substrate. FMN is bound by residues 132–133 (QS) and Trp-177. 183 to 185 (RLH) provides a ligand contact to substrate. Residue Arg-187 participates in FMN binding.

It belongs to the pyridoxamine 5'-phosphate oxidase family. As to quaternary structure, homodimer. FMN is required as a cofactor.

It carries out the reaction pyridoxamine 5'-phosphate + O2 + H2O = pyridoxal 5'-phosphate + H2O2 + NH4(+). The catalysed reaction is pyridoxine 5'-phosphate + O2 = pyridoxal 5'-phosphate + H2O2. The protein operates within cofactor metabolism; pyridoxal 5'-phosphate salvage; pyridoxal 5'-phosphate from pyridoxamine 5'-phosphate: step 1/1. It functions in the pathway cofactor metabolism; pyridoxal 5'-phosphate salvage; pyridoxal 5'-phosphate from pyridoxine 5'-phosphate: step 1/1. Its function is as follows. Catalyzes the oxidation of either pyridoxine 5'-phosphate (PNP) or pyridoxamine 5'-phosphate (PMP) into pyridoxal 5'-phosphate (PLP). The polypeptide is Pyridoxine/pyridoxamine 5'-phosphate oxidase (Rhizobium etli (strain ATCC 51251 / DSM 11541 / JCM 21823 / NBRC 15573 / CFN 42)).